The following is a 258-amino-acid chain: Aspartate/glutamate leucyltransferase (258 aa).

This sequence belongs to the R-transferase family. Bpt subfamily.

The protein resides in the cytoplasm. It carries out the reaction N-terminal L-glutamyl-[protein] + L-leucyl-tRNA(Leu) = N-terminal L-leucyl-L-glutamyl-[protein] + tRNA(Leu) + H(+). It catalyses the reaction N-terminal L-aspartyl-[protein] + L-leucyl-tRNA(Leu) = N-terminal L-leucyl-L-aspartyl-[protein] + tRNA(Leu) + H(+). Its function is as follows. Functions in the N-end rule pathway of protein degradation where it conjugates Leu from its aminoacyl-tRNA to the N-termini of proteins containing an N-terminal aspartate or glutamate. This is Aspartate/glutamate leucyltransferase from Rhodopseudomonas palustris (strain TIE-1).